Reading from the N-terminus, the 297-residue chain is Homoserine kinase (297 aa).

Residue Pro-84 to Ala-94 coordinates ATP.

The protein belongs to the GHMP kinase family. Homoserine kinase subfamily.

The protein resides in the cytoplasm. It catalyses the reaction L-homoserine + ATP = O-phospho-L-homoserine + ADP + H(+). It functions in the pathway amino-acid biosynthesis; L-threonine biosynthesis; L-threonine from L-aspartate: step 4/5. Functionally, catalyzes the ATP-dependent phosphorylation of L-homoserine to L-homoserine phosphate. In Shouchella clausii (strain KSM-K16) (Alkalihalobacillus clausii), this protein is Homoserine kinase.